The chain runs to 419 residues: Putative Bro-N domain-containing protein 201R (419 aa).

A Bro-N domain is found at 4–136 (LINLKDCKEY…KILPSIRKYG (133 aa)). The stretch at 150–195 (QLALKDKSEEELQIKLQEERIEKENAYMKLRSEAKRHKEQIKRTLE) forms a coiled coil.

Belongs to the IIV-6 201R/289L family.

The protein is Putative Bro-N domain-containing protein 201R of Acheta domesticus (House cricket).